Consider the following 528-residue polypeptide: GMP synthase [glutamine-hydrolyzing] (528 aa).

One can recognise a Glutamine amidotransferase type-1 domain in the interval 3-199 (KVAIIDFGSQ…FLDIAGCQKD (197 aa)). Catalysis depends on Cys-83, which acts as the Nucleophile. Residues His-174 and Glu-176 contribute to the active site. The 195-residue stretch at 200–394 (WTVTSFIDDQ…LGISTEILMR (195 aa)) folds into the GMPS ATP-PPase domain. Residue 227–233 (SGGVDSS) participates in ATP binding.

As to quaternary structure, homodimer.

It carries out the reaction XMP + L-glutamine + ATP + H2O = GMP + L-glutamate + AMP + diphosphate + 2 H(+). It functions in the pathway purine metabolism; GMP biosynthesis; GMP from XMP (L-Gln route): step 1/1. In terms of biological role, catalyzes the synthesis of GMP from XMP. This chain is GMP synthase [glutamine-hydrolyzing], found in Ehrlichia ruminantium (strain Gardel).